A 246-amino-acid chain; its full sequence is Probable transcriptional regulatory protein HSM_1763 (246 aa).

This sequence belongs to the TACO1 family.

It localises to the cytoplasm. The polypeptide is Probable transcriptional regulatory protein HSM_1763 (Histophilus somni (strain 2336) (Haemophilus somnus)).